A 112-amino-acid chain; its full sequence is MAM and fibronectin type III domain-containing protein 2 (112 aa).

As to expression, component of the acid-insoluble and acid-soluble organic matrix of the aragonitic skeleton (at protein level).

The protein resides in the secreted. The polypeptide is MAM and fibronectin type III domain-containing protein 2 (Acropora millepora (Staghorn coral)).